The sequence spans 202 residues: LexA repressor (202 aa).

Positions 28–48 (RAEIAAQLGFRSPNAAEEHLK) form a DNA-binding region, H-T-H motif. Residues serine 119 and lysine 156 each act as for autocatalytic cleavage activity in the active site.

It belongs to the peptidase S24 family. As to quaternary structure, homodimer.

The catalysed reaction is Hydrolysis of Ala-|-Gly bond in repressor LexA.. In terms of biological role, represses a number of genes involved in the response to DNA damage (SOS response), including recA and lexA. Binds to the 16 bp palindromic sequence 5'-CTGTATATATATACAG-3'. In the presence of single-stranded DNA, RecA interacts with LexA causing an autocatalytic cleavage which disrupts the DNA-binding part of LexA, leading to derepression of the SOS regulon and eventually DNA repair. This is LexA repressor from Erwinia tasmaniensis (strain DSM 17950 / CFBP 7177 / CIP 109463 / NCPPB 4357 / Et1/99).